The following is a 324-amino-acid chain: Putative S-adenosyl-L-methionine-dependent methyltransferase MMAR_1059 (324 aa).

S-adenosyl-L-methionine is bound by residues aspartate 138 and 167-168 (DL).

Belongs to the UPF0677 family.

Functionally, exhibits S-adenosyl-L-methionine-dependent methyltransferase activity. This chain is Putative S-adenosyl-L-methionine-dependent methyltransferase MMAR_1059, found in Mycobacterium marinum (strain ATCC BAA-535 / M).